Consider the following 344-residue polypeptide: Follistatin (344 aa).

Positions 1–29 (MARPRHQPGGLCLLLLLLCQFMEDRSAQA) are cleaved as a signal peptide. The TB domain maps to 30–103 (GNCWLRQAKN…TCENVDCGPG (74 aa)). 18 disulfides stabilise this stretch: Cys32–Cys55, Cys42–Cys88, Cys56–Cys91, Cys95–Cys106, Cys100–Cys116, Cys118–Cys150, Cys122–Cys143, Cys132–Cys164, Cys168–Cys179, Cys173–Cys189, Cys192–Cys225, Cys196–Cys218, Cys207–Cys239, Cys245–Cys256, Cys250–Cys267, Cys270–Cys302, Cys274–Cys295, and Cys284–Cys316. The Follistatin-like 1 domain occupies 94 to 117 (TCENVDCGPGKKCRMNKKNKPRCV). In terms of domain architecture, Kazal-like 1 spans 112–166 (NKPRCVCAPDCSNITWKGLVCGLDGKTYRNECALLKARCKEQPELQVQYQGKCKK). A glycan (N-linked (GlcNAc...) asparagine) is linked at Asn124. Residues 167 to 190 (TCRDVFCPGSSTCVVDQTNNAYCV) enclose the Follistatin-like 2 domain. The region spanning 186–241 (NAYCVTCNRICPEPTSSEQYLCGNDGVTYPSACHLRKATCLLGRSIGLAYEGKCIK) is the Kazal-like 2 domain. The region spanning 244-268 (SCDDIQCTGGKKCLWDFKVGRGRCS) is the Follistatin-like 3 domain. One can recognise a Kazal-like 3 domain in the interval 261 to 318 (KVGRGRCSLCGELCPESKSEEPVCASDNATYASECAMKEAACSSGVLLEVKHSGSCNS). Residue Asn288 is glycosylated (N-linked (GlcNAc...) asparagine). A disordered region spans residues 316–344 (CNSISEDTEDEEEDEDQDYSFPISSILEW). Over residues 321-333 (EDTEDEEEDEDQD) the composition is skewed to acidic residues.

In terms of assembly, monomer.

It is found in the secreted. In terms of biological role, binds directly to activin and functions as an activin antagonist. Specific inhibitor of the biosynthesis and secretion of pituitary follicle stimulating hormone (FSH). The chain is Follistatin from Bubalus bubalis (Domestic water buffalo).